Consider the following 475-residue polypeptide: Bifunctional purple acid phosphatase 26 (475 aa).

An N-terminal signal peptide occupies residues 1-30 (MNHLVIISVFLSSVLLLYRGESGITSSFIR). A glycan (N-linked (GlcNAc...) asparagine) is linked at Asn-103. Fe cation contacts are provided by Asp-162, Asp-189, and Tyr-192. Asp-189 provides a ligand contact to Zn(2+). Residues Asn-227 and His-312 each coordinate Zn(2+). Asn-227 is a substrate binding site. His-322 serves as the catalytic Proton donor. His-349 contributes to the Zn(2+) binding site. 349–351 (HVH) contributes to the substrate binding site. His-351 serves as a coordination point for Fe cation. N-linked (GlcNAc...) asparagine glycans are attached at residues Asn-365 and Asn-422.

The protein belongs to the metallophosphoesterase superfamily. Purple acid phosphatase family. As to quaternary structure, homodimer. Requires Fe cation as cofactor. Zn(2+) is required as a cofactor. Glycosylated. Expressed in roots, stems, leaves, flowers and siliques.

It is found in the vacuole. It catalyses the reaction a phosphate monoester + H2O = an alcohol + phosphate. It carries out the reaction 2 a phenolic donor + H2O2 = 2 a phenolic radical donor + 2 H2O. Activated by Mg(2+), Co(2+), Mn(2+) and Ba(2+). Inhibited by Fe(2+), Cu(2+), Zn(2+), NaF, molybdate, arsenate, vanadate and inorganic phosphate. No effect of tartrate, Asp, Gln, glutathione, Asn, ascorbic acid and phosphite. Metallo-phosphoesterase involved in phosphate metabolism. Acid phosphatase activity with phosphoenolpyruvate, inorganic pyrophosphate, phenyl-phosphate and p-nitrophenyl-phosphate as the most effective substrates. No activity with phytic acid, phosphocholine or bis-p-nitrophenyl-phosphate. Has a peroxidase activity at alkaline pH. In Arabidopsis thaliana (Mouse-ear cress), this protein is Bifunctional purple acid phosphatase 26 (PAP26).